Reading from the N-terminus, the 501-residue chain is L-arabinose isomerase (501 aa).

Glutamate 307, glutamate 334, histidine 351, and histidine 450 together coordinate Mn(2+).

The protein belongs to the arabinose isomerase family. Mn(2+) is required as a cofactor.

It catalyses the reaction beta-L-arabinopyranose = L-ribulose. It functions in the pathway carbohydrate degradation; L-arabinose degradation via L-ribulose; D-xylulose 5-phosphate from L-arabinose (bacterial route): step 1/3. Catalyzes the conversion of L-arabinose to L-ribulose. This chain is L-arabinose isomerase, found in Acidothermus cellulolyticus (strain ATCC 43068 / DSM 8971 / 11B).